We begin with the raw amino-acid sequence, 273 residues long: Glutamate 5-kinase (273 aa).

Residue lysine 15 coordinates ATP. Serine 55, aspartate 142, and asparagine 158 together coordinate substrate. ATP contacts are provided by residues 178 to 179 (SD) and 220 to 226 (TGGMLSK).

It belongs to the glutamate 5-kinase family.

It is found in the cytoplasm. The catalysed reaction is L-glutamate + ATP = L-glutamyl 5-phosphate + ADP. The protein operates within amino-acid biosynthesis; L-proline biosynthesis; L-glutamate 5-semialdehyde from L-glutamate: step 1/2. Functionally, catalyzes the transfer of a phosphate group to glutamate to form L-glutamate 5-phosphate. This chain is Glutamate 5-kinase, found in Streptococcus pyogenes serotype M6 (strain ATCC BAA-946 / MGAS10394).